We begin with the raw amino-acid sequence, 219 residues long: Carboxypeptidase Y inhibitor (219 aa).

Residue M1 is modified to N-acetylmethionine.

Belongs to the phosphatidylethanolamine-binding protein family. In terms of assembly, monomer.

Its subcellular location is the cytoplasm. Specific and potent inhibitor of carboxypeptidase Y. The chain is Carboxypeptidase Y inhibitor (TFS1) from Saccharomyces cerevisiae (strain ATCC 204508 / S288c) (Baker's yeast).